The chain runs to 374 residues: Alanine racemase (374 aa).

Lysine 35 serves as the catalytic Proton acceptor; specific for D-alanine. Lysine 35 carries the N6-(pyridoxal phosphate)lysine modification. Arginine 130 contributes to the substrate binding site. Catalysis depends on tyrosine 261, which acts as the Proton acceptor; specific for L-alanine. Methionine 309 provides a ligand contact to substrate.

The protein belongs to the alanine racemase family. It depends on pyridoxal 5'-phosphate as a cofactor.

It carries out the reaction L-alanine = D-alanine. It participates in amino-acid biosynthesis; D-alanine biosynthesis; D-alanine from L-alanine: step 1/1. Functionally, catalyzes the interconversion of L-alanine and D-alanine. May also act on other amino acids. The protein is Alanine racemase (alr) of Albidiferax ferrireducens (strain ATCC BAA-621 / DSM 15236 / T118) (Rhodoferax ferrireducens).